Consider the following 304-residue polypeptide: Putative integrase/recombinase HI_1414 (304 aa).

Residues 30-109 (TLFSDVIKRY…TIGHIFKIAL (80 aa)) form the Core-binding (CB) domain. A Tyr recombinase domain is found at 131-304 (PRTQRVTEEN…DMAEVAELLD (174 aa)). Residues Arg174, Lys199, His256, Arg259, and His281 contribute to the active site. The active-site O-(3'-phospho-DNA)-tyrosine intermediate is the Tyr291.

It belongs to the 'phage' integrase family.

This chain is Putative integrase/recombinase HI_1414, found in Haemophilus influenzae (strain ATCC 51907 / DSM 11121 / KW20 / Rd).